A 103-amino-acid chain; its full sequence is Large ribosomal subunit protein bL21 (103 aa).

Belongs to the bacterial ribosomal protein bL21 family. As to quaternary structure, part of the 50S ribosomal subunit. Contacts protein L20.

This protein binds to 23S rRNA in the presence of protein L20. The polypeptide is Large ribosomal subunit protein bL21 (Mycobacterium leprae (strain Br4923)).